Here is an 88-residue protein sequence, read N- to C-terminus: Small ribosomal subunit protein uS17 (88 aa).

The protein belongs to the universal ribosomal protein uS17 family. Part of the 30S ribosomal subunit.

Its function is as follows. One of the primary rRNA binding proteins, it binds specifically to the 5'-end of 16S ribosomal RNA. This Lactobacillus helveticus (strain DPC 4571) protein is Small ribosomal subunit protein uS17.